Consider the following 763-residue polypeptide: ATP-dependent RNA helicase SUPV3L1, mitochondrial (763 aa).

A mitochondrion-targeting transit peptide spans 1 to 65; sequence MSVNRCIYLL…RPLDTSLFIP (65 aa). Residues 39–58 form a disordered region; the sequence is RRTFDKLSTRHSSSGSSRPL. Positions 192–332 constitute a Helicase ATP-binding domain; sequence EARAIQRKIV…AVDFITELMF (141 aa). Residue 205–212 participates in ATP binding; sequence GPTNSGKT. The region spanning 354 to 519 is the Helicase C-terminal domain; it reads HAVESLDNLK…PTAEQIEMFA (166 aa). Disordered regions lie at residues 679 to 721 and 742 to 763; these read DSQP…KSSL and EWAREQNEDNSIPVNNGKRKKK. The span at 680 to 697 shows a compositional bias: polar residues; the sequence is SQPTDTESNSSSTVPESE.

Belongs to the helicase family. Mg(2+) is required as a cofactor. Requires Mn(2+) as cofactor.

Its subcellular location is the nucleus. It localises to the mitochondrion matrix. The protein localises to the mitochondrion nucleoid. The catalysed reaction is ATP + H2O = ADP + phosphate + H(+). Major helicase player in mitochondrial RNA metabolism. Component of the mitochondrial degradosome (mtEXO) complex, that degrades 3' overhang double-stranded RNA with a 3'-to-5' directionality in an ATP-dependent manner. ATPase and ATP-dependent multisubstrate helicase, able to unwind double-stranded (ds) DNA and RNA, and RNA/DNA heteroduplexes in the 5'-to-3' direction. Plays a role in the RNA surveillance system in mitochondria; regulates the stability of mature mRNAs, the removal of aberrantly formed mRNAs and the rapid degradation of non coding processing intermediates. Also implicated in recombination and chromatin maintenance pathways. May protect cells from apoptosis. Associates with mitochondrial DNA. The polypeptide is ATP-dependent RNA helicase SUPV3L1, mitochondrial (supv3l1) (Danio rerio (Zebrafish)).